The following is a 257-amino-acid chain: Geranylgeranylglyceryl phosphate synthase (257 aa).

2 residues coordinate Mg(2+): Asp27 and Thr57. Sn-glycerol 1-phosphate is bound by residues 175 to 181 (YLEAGSG), 207 to 208 (GG), and 229 to 230 (GN).

Belongs to the GGGP/HepGP synthase family. Group II subfamily. Requires Mg(2+) as cofactor.

The protein localises to the cytoplasm. The catalysed reaction is sn-glycerol 1-phosphate + (2E,6E,10E)-geranylgeranyl diphosphate = sn-3-O-(geranylgeranyl)glycerol 1-phosphate + diphosphate. It participates in membrane lipid metabolism; glycerophospholipid metabolism. Prenyltransferase that catalyzes the transfer of the geranylgeranyl moiety of geranylgeranyl diphosphate (GGPP) to the C3 hydroxyl of sn-glycerol-1-phosphate (G1P). This reaction is the first ether-bond-formation step in the biosynthesis of archaeal membrane lipids. The chain is Geranylgeranylglyceryl phosphate synthase from Sulfolobus acidocaldarius (strain ATCC 33909 / DSM 639 / JCM 8929 / NBRC 15157 / NCIMB 11770).